The sequence spans 466 residues: Argininosuccinate lyase (466 aa).

The protein belongs to the lyase 1 family. Argininosuccinate lyase subfamily.

The protein resides in the cytoplasm. It carries out the reaction 2-(N(omega)-L-arginino)succinate = fumarate + L-arginine. It participates in amino-acid biosynthesis; L-arginine biosynthesis; L-arginine from L-ornithine and carbamoyl phosphate: step 3/3. The protein is Argininosuccinate lyase of Clostridium perfringens (strain ATCC 13124 / DSM 756 / JCM 1290 / NCIMB 6125 / NCTC 8237 / Type A).